An 838-amino-acid polypeptide reads, in one-letter code: Lymphoid-specific helicase (838 aa).

A coiled-coil region spans residues 30–115 (MLEEEEQLEA…SLKVKKGKNS (86 aa)). The segment covering 94–108 (QKKKEKLERKKESLK) has biased composition (basic and acidic residues). The tract at residues 94–135 (QKKKEKLERKKESLKVKKGKNSIDASEEKPVMRKKRGREDES) is disordered. Ser-115 carries the post-translational modification Phosphoserine. A compositionally biased stretch (basic and acidic residues) spans 119-134 (SEEKPVMRKKRGREDE). The region spanning 235–403 (RMLWENGING…WSLLNFLLPD (169 aa)) is the Helicase ATP-binding domain. 248 to 255 (DEMGLGKT) provides a ligand contact to ATP. Positions 354–357 (DEGH) match the DEAH box motif. A phosphoserine mark is found at Ser-503 and Ser-515. One can recognise a Helicase C-terminal domain in the interval 603–767 (ILDRMLPELK…GLNLSKNFLD (165 aa)).

The protein belongs to the SNF2/RAD54 helicase family. In terms of tissue distribution, highly expressed in proliferative tissues such as adult thymus and testis, and expressed at lower levels in uterus, small intestine, colon, and peripheral blood mononuclear cells. Also expressed in neoplastic cell lines including those derived from myeloid and lymphoid leukemias.

The protein resides in the nucleus. Plays an essential role in normal development and survival. Involved in regulation of the expansion or survival of lymphoid cells. Required for de novo or maintenance DNA methylation. May control silencing of the imprinted CDKN1C gene through DNA methylation. May play a role in formation and organization of heterochromatin, implying a functional role in the regulation of transcription and mitosis. The chain is Lymphoid-specific helicase from Homo sapiens (Human).